We begin with the raw amino-acid sequence, 864 residues long: Eukaryotic translation initiation factor 3 subunit C (864 aa).

The tract at residues 1-77 (MSRFFARGGS…EESEDEERVT (77 aa)) is disordered. Acidic residues predominate over residues 14 to 54 (SSSEDEQELYSDREEEEQFSDSEEESSEAESSEEESSDDEG). In terms of domain architecture, PCI spans 602–776 (FHMHINLELL…NAIVFRKGVE (175 aa)). Residues 815–864 (RDQGAGARGGRGAGRGGQARGGPRFPGGQQGRRPGGQQFSGGALGGAIKA) form a disordered region. Gly residues predominate over residues 820–864 (GARGGRGAGRGGQARGGPRFPGGQQGRRPGGQQFSGGALGGAIKA).

It belongs to the eIF-3 subunit C family. As to quaternary structure, component of the eukaryotic translation initiation factor 3 (eIF-3) complex.

Its subcellular location is the cytoplasm. Its function is as follows. Component of the eukaryotic translation initiation factor 3 (eIF-3) complex, which is involved in protein synthesis of a specialized repertoire of mRNAs and, together with other initiation factors, stimulates binding of mRNA and methionyl-tRNAi to the 40S ribosome. The eIF-3 complex specifically targets and initiates translation of a subset of mRNAs involved in cell proliferation. This chain is Eukaryotic translation initiation factor 3 subunit C (nip1), found in Aspergillus terreus (strain NIH 2624 / FGSC A1156).